Here is a 512-residue protein sequence, read N- to C-terminus: Acid-sensing ion channel 2 (512 aa).

Topologically, residues 1–37 are cytoplasmic; sequence MDLKESPSEGSLQPSSIQIFANTSTLHGIRHIFVYGP. Serine 8 and serine 11 each carry phosphoserine. Residues 38–58 form a helical membrane-spanning segment; it reads LTIRRVLWAVAFVGSLGLLLV. Topologically, residues 59–427 are extracellular; the sequence is ESSERVSYYF…EQKKAYEVAA (369 aa). 6 disulfides stabilise this stretch: cysteine 92–cysteine 193, cysteine 289–cysteine 364, cysteine 307–cysteine 360, cysteine 311–cysteine 358, cysteine 320–cysteine 342, and cysteine 322–cysteine 334. Asparagine 365 and asparagine 392 each carry an N-linked (GlcNAc...) asparagine glycan. Residues 428 to 448 traverse the membrane as a helical segment; it reads LLGDIGGQMGLFIGASLLTIL. The GAS motif; ion selectivity filter signature appears at 441–443; sequence GAS. Residues 449–512 lie on the Cytoplasmic side of the membrane; the sequence is ELFDYIYELI…ALGTLEEIAC (64 aa).

The protein belongs to the amiloride-sensitive sodium channel (TC 1.A.6) family. ASIC2 subfamily. As to quaternary structure, can form homotrimers. Heterotrimer; forms functional heterotrimers producing channel with different properties. Forms heterotrimers with ASIC1; while ASIC1 determines current amplitude, ASIC2 influences the properties of the current. Forms heterotrimers with ASIC3; resulting in channels with distinct properties. Interacts with STOM; STOM regulates the gating of ASIC2-containing channels. Interacts with PICK1; promotes ASIC3 phosphorylation by PKC and activation of ASIC2/ASIC3 heterotrimers. Expressed in sciatic nerve and dorsal root ganglion (DRG) (at protein level). Both isoforms display the same expression pattern except in DRG where isoform 2 is more abundantly expressed. Widely distributed throughout the brain. Highly expressed in the main olfactory bulb, neo- and allo-cortical regions, hippocampal formation, habenula, basolateral amygdaloid nuclei, and cerebellum. In the olfactory system, expressed in the glomerular cell layer, the internal granular layer, and the mitral and internal plexiform cell layers. Within the glomerular layer, restricted to the periglomerular cells. In the neocortex, strongly expressed in the large pyramidal neurons in all cortical layers as well as in the oligo-, astro-, or micro-glia cells. In the hippocampal formation, expressed in dentate granule cells and hilar neurons, as well as in pyramidal cells of CA1-CA3 subfields. Expressed in stratum oriens and radiatum of all subfields. Within the thalamus, expressed moderately in the medial and lateral habenula. In the cerebellar cortex expressed in Purkinje cells and granule cells. Expressed at low levels in choroid plexus.

Its subcellular location is the cell membrane. The enzyme catalyses Na(+)(in) = Na(+)(out). It catalyses the reaction K(+)(in) = K(+)(out). It carries out the reaction Li(+)(in) = Li(+)(out). Its activity is regulated as follows. Inhibited by the diuretic drug amiloride. Inhibited by gadolinium ions, the heterotrimer with ASIC3 being more sensitive. Zn(2+) potentiates the acid activation of ASIC2-containing homomeric and heteromeric channels. The snake venom mambalgin-1 and mambalgin-2 inhibit the homotrimers composed of ASIC1 and ASIC2 and have strong analgesic effects. Its function is as follows. Forms pH-gated trimeric sodium channels that act as postsynaptic excitatory sensors in the nervous system. Upon extracellular acidification, these channels generate rapid, transient inward currents that fully desensitize. Highly selective for sodium, they are permeable to other cations. By forming heterotrimeric channels with ASIC1, could contribute to synaptic plasticity, learning, and memory. Additionally, as acid sensors at nerve terminals, plays a role in mechanosensation and phototransduction. Has no pH-gated sodium channel activity per se but can associate with other ASICs to produce functional channels with specific properties. This is Acid-sensing ion channel 2 from Rattus norvegicus (Rat).